The chain runs to 191 residues: Calcium and integrin-binding protein 1 (191 aa).

Gly2 is lipidated: N-myristoyl glycine. EF-hand domains lie at 103 to 138 (TPDI…LTGE) and 148 to 183 (EMKQ…SPDF). Ca(2+) is bound by residues Asp116, Asp118, Asp120, Thr122, Asp127, Asp161, Asp163, Asp165, Thr167, and Glu172.

Monomer. Interacts with the heterodimeric integrin alpha-IIb/beta3 (ITGA2B-ITGB3). Interacts with ITGA2B (via cytoplasmic domain); the interaction is direct and calcium-dependent. Interacts with the protein kinases PLK2/SNK and PRKDC (via the region immediately upstream of the kinase domain). Interacts with PLK3; the interaction inhibits PLK3 kinase activity. Interacts with PSEN2. Interacts (via C-terminus) with F8. Interacts with NBR1 (via C-terminus). Interacts with FEZ1 (via C-terminus). Interacts with UBR5 (via C-terminus); the interaction is sensitive to DNA damage, and may target CIB1 for ubiquitin-mediated degradation. Interacts with IFI6; the interaction is direct. Interacts with BCL2. Interacts with TAS1R2 (via C-terminus); the interaction is independent of the myristoylation state of CIB1. Interacts with ITPR3; the interaction occurs in a calcium dependent manner. Interacts with PTK2/FAK1. Interacts with MAP3K5; the interaction inhibits MAP3K5 activation by phosphorylation, and its subsequent interaction with TRAF2. Interacts (via C-terminal region) with STMN2 (via the N-terminal region); the interaction is direct, occurs in a calcium-dependent manner and attenuates the STMN2-induced neurite outgrowth inhibition. Interacts with SPHK1, the interaction occurs in a calcium-dependent manner. Interacts with ITGA2B (via C-terminal cytoplasmic tail); the interaction occurs upon platelet aggregation and is stabilized/increased in a calcium and magnesium-dependent manner. Interacts with PAK1 (via N-terminal region); the interaction is direct and occurs in a calcium-dependent manner. Interacts with RAC3 (via C-terminal region); the interaction induces their association with the cytoskeleton upon alpha-IIb/beta3 integrin-mediated adhesion. Interacts with ITGA5 and ITGAV. Interacts with MYO1C. Interacts with ITGA2B (via C-terminal cytoplasmic tail region). Interacts (via C-terminal region) with PPP3R1 isoform 1 and isoform 2; the interactions increase upon cardiomyocytes hypertrophy. Interacts with CACNA1C; the interaction increases upon cardiomyocytes hypertrophy. Interacts and forms a complex with TMC6 and TMC8; the interaction stabilizes each component of the complex. In terms of tissue distribution, expressed strongly in Sertoli cells, weakly in pachytene spermatocytes, round spermatids and condensing spermatids (at protein level). Expressed in testis. Expressed in cardiac myocytes and endothelial cells. Expressed in heart, liver, spleen, lung, kidney, brain and inner ear. In the inner ear, expressed in the vestibule, basilar membrane and spiral ganglion cells.

It localises to the membrane. The protein localises to the cell membrane. The protein resides in the sarcolemma. Its subcellular location is the apical cell membrane. It is found in the cell projection. It localises to the ruffle membrane. The protein localises to the filopodium tip. The protein resides in the growth cone. Its subcellular location is the lamellipodium. It is found in the cytoplasm. It localises to the cytoskeleton. The protein localises to the microtubule organizing center. The protein resides in the centrosome. Its subcellular location is the perinuclear region. It is found in the nucleus. It localises to the neuron projection. The protein localises to the perikaryon. Calcium-binding protein that plays a role in the regulation of numerous cellular processes, such as cell differentiation, cell division, cell proliferation, cell migration, thrombosis, angiogenesis, cardiac hypertrophy and apoptosis. Involved in bone marrow megakaryocyte differentiation by negatively regulating thrombopoietin-mediated signaling pathway. Participates in the endomitotic cell cycle of megakaryocyte, a form of mitosis in which both karyokinesis and cytokinesis are interrupted. Plays a role in integrin signaling by negatively regulating alpha-IIb/beta3 activation in thrombin-stimulated megakaryocytes preventing platelet aggregation. Up-regulates PTK2/FAK1 activity, and is also needed for the recruitment of PTK2/FAK1 to focal adhesions; it thus appears to play an important role in focal adhesion formation. Positively regulates cell migration on fibronectin in a CDC42-dependent manner, the effect being negatively regulated by PAK1. Functions as a negative regulator of stress activated MAP kinase (MAPK) signaling pathways. Down-regulates inositol 1,4,5-trisphosphate receptor-dependent calcium signaling. Involved in sphingosine kinase SPHK1 translocation to the plasma membrane in a N-myristoylation-dependent manner preventing TNF-alpha-induced apoptosis. Regulates serine/threonine-protein kinase PLK3 activity for proper completion of cell division progression. Plays a role in microtubule (MT) dynamics during neuronal development; disrupts the MT depolymerization activity of STMN2 attenuating NGF-induced neurite outgrowth and the MT reorganization at the edge of lamellipodia. Promotes cardiomyocyte hypertrophy via activation of the calcineurin/NFAT signaling pathway. Stimulates calcineurin PPP3R1 activity by mediating its anchoring to the sarcolemma. In ischemia-induced (pathological or adaptive) angiogenesis, stimulates endothelial cell proliferation, migration and microvessel formation by activating the PAK1 and ERK1/ERK2 signaling pathway. Also promotes cancer cell survival and proliferation. May regulate cell cycle and differentiation of spermatogenic germ cells, and/or differentiation of supporting Sertoli cells. Forms a complex with TMC6/EVER1 and TMC8/EVER2 in lymphocytes and keratynocytes where CIB1 stabilizes TMC6 and TMC8 levels and reciprocally. This Mus musculus (Mouse) protein is Calcium and integrin-binding protein 1 (Cib1).